The primary structure comprises 39 residues: Antimicrobial peptide CHP1 (39 aa).

3 disulfide bridges follow: C6–C28, C13–C34, and C18–C35.

Functionally, bactericidal activity; inhibits S.aureus and E.coli. This Gallus gallus (Chicken) protein is Antimicrobial peptide CHP1.